The chain runs to 267 residues: Acryloyl-CoA reductase electron transfer subunit gamma (267 aa).

Heterohexadecamer; tetramer of tetramers. Each tetramer is composed of 2 alpha (AcrC), a beta (AcrA) and a gamma (AcrB) subunit.

It localises to the cytoplasm. Functionally, part of the ETF-acryloyl-CoA reductase complex involved in the pathway of L-alanine fermentation. The electron transfer flavoprotein (ETF) serves as a specific electron acceptor for acryloyl-CoA reductase. The protein is Acryloyl-CoA reductase electron transfer subunit gamma (acrB) of Anaerotignum propionicum (Clostridium propionicum).